The primary structure comprises 126 residues: Small ribosomal subunit protein uS12 (126 aa).

Aspartate 89 carries the 3-methylthioaspartic acid modification.

Belongs to the universal ribosomal protein uS12 family. As to quaternary structure, part of the 30S ribosomal subunit. Contacts proteins S8 and S17. May interact with IF1 in the 30S initiation complex.

With S4 and S5 plays an important role in translational accuracy. Functionally, interacts with and stabilizes bases of the 16S rRNA that are involved in tRNA selection in the A site and with the mRNA backbone. Located at the interface of the 30S and 50S subunits, it traverses the body of the 30S subunit contacting proteins on the other side and probably holding the rRNA structure together. The combined cluster of proteins S8, S12 and S17 appears to hold together the shoulder and platform of the 30S subunit. This Sulfurimonas denitrificans (strain ATCC 33889 / DSM 1251) (Thiomicrospira denitrificans (strain ATCC 33889 / DSM 1251)) protein is Small ribosomal subunit protein uS12.